The following is a 221-amino-acid chain: Iron-sulfur cluster assembly SufBD family protein ycf24 (221 aa).

The protein belongs to the iron-sulfur cluster assembly SufBD family.

Its subcellular location is the plastid. It localises to the chloroplast. In Galdieria sulphuraria (Red alga), this protein is Iron-sulfur cluster assembly SufBD family protein ycf24 (ycf24).